The sequence spans 302 residues: MRADPAQCRLRQTGDVDPADGDGRRCHRRSPAYCGVRSGPGGCRHRYLISSLVSACLGFYYVHRVAHLTCRVSLKNLSGDIRNIGRTALPAVIGNLATPVGMAYVMAAMAPFGSQALATIGVIDRVIQVAFCVVFALPGALIPILGQNLGAMNTARVSQAIKMTYGLLIGYGSVTSLLLILLAEPLASLFHLAAERQVVFFAFCRWGGALDAHRAAIHCHLSLPQYGATGVRHTVRLVPRHLGTMPFVWYGAHKFGSVGVMLGQLLGNTIVAFCACVARASAHEKDVGHRDPFNREPIPPQE.

May be a membrane-bound protein, possibly involved in IAA or IAA-Lysine transport. This is an uncharacterized protein from Pseudomonas savastanoi (Pseudomonas syringae pv. savastanoi).